The following is a 268-amino-acid chain: DNA repair protein RecO (268 aa).

This sequence belongs to the RecO family.

Involved in DNA repair and RecF pathway recombination. This is DNA repair protein RecO from Parasynechococcus marenigrum (strain WH8102).